A 210-amino-acid polypeptide reads, in one-letter code: MQAQIVNKIFEIFSKNNPNPKTELIYKNDFTLLVAVILSAQATDISVNLATKSLFATYDTPEKILELGEEGLKKYIKSIGLFNSKAKNIIALCKILISNYQASVPNDFKALIKLPGVGRKTANVVLNCLFGMPTMAVDTHVFRVANRIGLAKGDTPEIVENELLQIIDTKWLTHAHHWLILHGRYICKARKPDCDICPIKEYCDYYFNLK.

Residues 108–127 (FKALIKLPGVGRKTANVVLN) form the HhH domain. The [4Fe-4S] cluster site is built by Cys-187, Cys-194, Cys-197, and Cys-203.

The protein belongs to the Nth/MutY family. It depends on [4Fe-4S] cluster as a cofactor.

The catalysed reaction is 2'-deoxyribonucleotide-(2'-deoxyribose 5'-phosphate)-2'-deoxyribonucleotide-DNA = a 3'-end 2'-deoxyribonucleotide-(2,3-dehydro-2,3-deoxyribose 5'-phosphate)-DNA + a 5'-end 5'-phospho-2'-deoxyribonucleoside-DNA + H(+). Its function is as follows. DNA repair enzyme that has both DNA N-glycosylase activity and AP-lyase activity. The DNA N-glycosylase activity releases various damaged pyrimidines from DNA by cleaving the N-glycosidic bond, leaving an AP (apurinic/apyrimidinic) site. The AP-lyase activity cleaves the phosphodiester bond 3' to the AP site by a beta-elimination, leaving a 3'-terminal unsaturated sugar and a product with a terminal 5'-phosphate. In Rickettsia conorii (strain ATCC VR-613 / Malish 7), this protein is Endonuclease III.